Consider the following 266-residue polypeptide: Orotidine 5'-phosphate decarboxylase (266 aa).

Substrate contacts are provided by residues Asp-37, 59–61 (KTH), 91–100 (DRKFADIGNT), Tyr-217, and Arg-235. Catalysis depends on Lys-93, which acts as the Proton donor.

It belongs to the OMP decarboxylase family.

The enzyme catalyses orotidine 5'-phosphate + H(+) = UMP + CO2. It participates in pyrimidine metabolism; UMP biosynthesis via de novo pathway; UMP from orotate: step 2/2. In Cyberlindnera jadinii (Torula yeast), this protein is Orotidine 5'-phosphate decarboxylase (URA3).